The chain runs to 180 residues: Translation initiation factor IF-3 (180 aa).

Belongs to the IF-3 family. As to quaternary structure, monomer.

Its subcellular location is the cytoplasm. In terms of biological role, IF-3 binds to the 30S ribosomal subunit and shifts the equilibrium between 70S ribosomes and their 50S and 30S subunits in favor of the free subunits, thus enhancing the availability of 30S subunits on which protein synthesis initiation begins. This is Translation initiation factor IF-3 from Salmonella paratyphi A (strain ATCC 9150 / SARB42).